Reading from the N-terminus, the 503-residue chain is ATP synthase subunit alpha (503 aa).

ATP is bound at residue 171–178 (DRQTGKTA).

The protein belongs to the ATPase alpha/beta chains family. F-type ATPases have 2 components, CF(1) - the catalytic core - and CF(0) - the membrane proton channel. CF(1) has five subunits: alpha(3), beta(3), gamma(1), delta(1), epsilon(1). CF(0) has four main subunits: a(1), b(1), b'(1) and c(9-12).

It localises to the cellular thylakoid membrane. It catalyses the reaction ATP + H2O + 4 H(+)(in) = ADP + phosphate + 5 H(+)(out). In terms of biological role, produces ATP from ADP in the presence of a proton gradient across the membrane. The alpha chain is a regulatory subunit. The chain is ATP synthase subunit alpha from Synechococcus sp. (strain PCC 6716).